The primary structure comprises 230 residues: 7-cyano-7-deazaguanine synthase (230 aa).

10–20 (LSGGLDSATTA) contacts ATP. Residues C191, C199, C202, and C205 each contribute to the Zn(2+) site.

Belongs to the QueC family. Zn(2+) is required as a cofactor.

The enzyme catalyses 7-carboxy-7-deazaguanine + NH4(+) + ATP = 7-cyano-7-deazaguanine + ADP + phosphate + H2O + H(+). Its pathway is purine metabolism; 7-cyano-7-deazaguanine biosynthesis. Its function is as follows. Catalyzes the ATP-dependent conversion of 7-carboxy-7-deazaguanine (CDG) to 7-cyano-7-deazaguanine (preQ(0)). In Gloeothece citriformis (strain PCC 7424) (Cyanothece sp. (strain PCC 7424)), this protein is 7-cyano-7-deazaguanine synthase.